The following is a 30-amino-acid chain: Brevinin-2Ej (30 aa).

A disulfide bridge connects residues Cys-24 and Cys-30.

As to expression, expressed by the skin glands.

The protein resides in the secreted. Its function is as follows. Shows antibacterial activity against representative Gram-negative and Gram-positive bacterial species, and hemolytic activity. The polypeptide is Brevinin-2Ej (Pelophylax ridibundus (Marsh frog)).